The primary structure comprises 928 residues: ATP-dependent DNA helicase PIF5 (928 aa).

A mitochondrion-targeting transit peptide spans 1 to 49; sequence MLSRLSAVWRPSRVALRIQRVDFTTCGNRLNRSTQPNEPPLVSGIAARS. Disordered regions lie at residues 29–141 and 176–231; these read RLNR…DVAI and LRAK…FSDA. The span at 52 to 61 shows a compositional bias: basic and acidic residues; the sequence is AKAEPVEKRG. Residue 264-271 coordinates ATP; it reads GGAGSGKS. 4 disordered regions span residues 389 to 421, 481 to 513, 545 to 572, and 585 to 607; these read PIPP…APSK, KSSA…AAAE, IYPS…EDTM, and STHE…SQPW. Positions 550-566 are enriched in polar residues; that stretch reads NDGSSQQTGSSNGANSV. A DNA-binding region spans residues 858–877; the sequence is QAYVALSRSTRLDNIRLLDF. Residues 898–928 are disordered; sequence EELDNEIEDDGTEGDEEALEGDGEYEGEVEE.

It belongs to the helicase family. PIF1 subfamily. Monomer. Mg(2+) is required as a cofactor.

The protein localises to the mitochondrion. The enzyme catalyses Couples ATP hydrolysis with the unwinding of duplex DNA at the replication fork by translocating in the 5'-3' direction. This creates two antiparallel DNA single strands (ssDNA). The leading ssDNA polymer is the template for DNA polymerase III holoenzyme which synthesizes a continuous strand.. It carries out the reaction ATP + H2O = ADP + phosphate + H(+). DNA-dependent ATPase and 5'-3' DNA helicase required for the maintenance of mitochondrial (kinetoplast) genome stability. Involved in processing of minicircle Okazaki fragments. This chain is ATP-dependent DNA helicase PIF5, found in Trypanosoma brucei brucei (strain 927/4 GUTat10.1).